Here is a 64-residue protein sequence, read N- to C-terminus: MVAPTLTARLYSLLFRRTSTFALTIVVGALFFERAFDQGADAIYEHINEGKLWKHIKHKYENKE.

Over 2–21 (VAPTLTARLYSLLFRRTSTF) the chain is Mitochondrial matrix. A helical transmembrane segment spans residues 22–47 (ALTIVVGALFFERAFDQGADAIYEHI). At 48–64 (NEGKLWKHIKHKYENKE) the chain is on the mitochondrial intermembrane side.

It belongs to the UQCR10/QCR9 family. Component of the ubiquinol-cytochrome c oxidoreductase (cytochrome b-c1 complex, complex III, CIII), a multisubunit enzyme composed of 11 subunits. The complex is composed of 3 respiratory subunits cytochrome b, cytochrome c1 and Rieske protein UQCRFS1, 2 core protein subunits UQCRC1/QCR1 and UQCRC2/QCR2, and 6 low-molecular weight protein subunits UQCRH/QCR6, UQCRB/QCR7, UQCRQ/QCR8, UQCR10/QCR9, UQCR11/QCR10 and subunit 9, the cleavage product of Rieske protein UQCRFS1. The complex exists as an obligatory dimer and forms supercomplexes (SCs) in the inner mitochondrial membrane with NADH-ubiquinone oxidoreductase (complex I, CI) and cytochrome c oxidase (complex IV, CIV), resulting in different assemblies (supercomplex SCI(1)III(2)IV(1) and megacomplex MCI(2)III(2)IV(2)). Interacts with STMP1.

The protein localises to the mitochondrion inner membrane. In terms of biological role, component of the ubiquinol-cytochrome c oxidoreductase, a multisubunit transmembrane complex that is part of the mitochondrial electron transport chain which drives oxidative phosphorylation. The respiratory chain contains 3 multisubunit complexes succinate dehydrogenase (complex II, CII), ubiquinol-cytochrome c oxidoreductase (cytochrome b-c1 complex, complex III, CIII) and cytochrome c oxidase (complex IV, CIV), that cooperate to transfer electrons derived from NADH and succinate to molecular oxygen, creating an electrochemical gradient over the inner membrane that drives transmembrane transport and the ATP synthase. The cytochrome b-c1 complex catalyzes electron transfer from ubiquinol to cytochrome c, linking this redox reaction to translocation of protons across the mitochondrial inner membrane, with protons being carried across the membrane as hydrogens on the quinol. In the process called Q cycle, 2 protons are consumed from the matrix, 4 protons are released into the intermembrane space and 2 electrons are passed to cytochrome c. The protein is Cytochrome b-c1 complex subunit 9 (UQCR10) of Bos taurus (Bovine).